We begin with the raw amino-acid sequence, 380 residues long: Probable protein phosphatase 2C 2 (380 aa).

The PPM-type phosphatase domain occupies 122 to 376; it reads GYSVYCKRGK…DDISVMLIQL (255 aa). Positions 158, 159, 321, and 367 each coordinate Mn(2+).

The protein belongs to the PP2C family. Mg(2+) is required as a cofactor. The cofactor is Mn(2+).

The catalysed reaction is O-phospho-L-seryl-[protein] + H2O = L-seryl-[protein] + phosphate. It carries out the reaction O-phospho-L-threonyl-[protein] + H2O = L-threonyl-[protein] + phosphate. In Arabidopsis thaliana (Mouse-ear cress), this protein is Probable protein phosphatase 2C 2.